Reading from the N-terminus, the 697-residue chain is Elongation factor G (697 aa).

In terms of domain architecture, tr-type G spans 8–282; the sequence is EDYRNIGIMA…AIVDYLPSPL (275 aa). GTP-binding positions include 17-24, 81-85, and 135-138; these read AHIDAGKT, DTPGH, and NKMD.

This sequence belongs to the TRAFAC class translation factor GTPase superfamily. Classic translation factor GTPase family. EF-G/EF-2 subfamily.

It is found in the cytoplasm. Functionally, catalyzes the GTP-dependent ribosomal translocation step during translation elongation. During this step, the ribosome changes from the pre-translocational (PRE) to the post-translocational (POST) state as the newly formed A-site-bound peptidyl-tRNA and P-site-bound deacylated tRNA move to the P and E sites, respectively. Catalyzes the coordinated movement of the two tRNA molecules, the mRNA and conformational changes in the ribosome. This is Elongation factor G from Metamycoplasma arthritidis (strain 158L3-1) (Mycoplasma arthritidis).